The primary structure comprises 141 residues: MKENDVVLRTVTKLVVFILLTFGFYVFFAGHNNPGGGFIGGLIFSSAFILMFLAFNVEEVLESLPIDFRILMIIGALVSSITAIMPTFFGKPFLSQYETTLTLPILGHIHVTTITLFELGILFSVVGVIVTVMLSLSGGRS.

The next 4 membrane-spanning stretches (helical) occupy residues 10–30, 35–55, 70–90, and 114–134; these read TVTK…FFAG, GGGF…FLAF, ILMI…TFFG, and ITLF…TVML.

Belongs to the CPA3 antiporters (TC 2.A.63) subunit B family. In terms of assembly, may form a heterooligomeric complex that consists of seven subunits: mnhA2, mnhB2, mnhC2, mnhD2, mnhE2, mnhF2 and mnhG2.

The protein localises to the cell membrane. This chain is Putative antiporter subunit mnhB2 (mnhB2), found in Staphylococcus aureus (strain MRSA252).